Reading from the N-terminus, the 335-residue chain is N-acetylglucosaminyl-phosphatidylinositol de-N-acetylase (335 aa).

The chain crosses the membrane as a helical span at residues Ser-3–Leu-23. 2 N-linked (GlcNAc...) asparagine glycosylation sites follow: Asn-128 and Asn-153.

Belongs to the PIGL family.

The protein localises to the endoplasmic reticulum membrane. The catalysed reaction is a 6-(N-acetyl-alpha-D-glucosaminyl)-1-(1,2-diacyl-sn-glycero-3-phospho)-1D-myo-inositol + H2O = a 6-(alpha-D-glucosaminyl)-1-(1,2-diacyl-sn-glycero-3-phospho)-1D-myo-inositol + acetate. The protein operates within glycolipid biosynthesis; glycosylphosphatidylinositol-anchor biosynthesis. Involved in the second step of GPI biosynthesis. De-N-acetylation of N-acetylglucosaminyl-phosphatidylinositol. The sequence is that of N-acetylglucosaminyl-phosphatidylinositol de-N-acetylase from Arthroderma benhamiae (strain ATCC MYA-4681 / CBS 112371) (Trichophyton mentagrophytes).